A 300-amino-acid chain; its full sequence is Ribosomal protein L11 methyltransferase (300 aa).

Residues Thr-152, Gly-173, Asp-195, and Asn-234 each coordinate S-adenosyl-L-methionine.

This sequence belongs to the methyltransferase superfamily. PrmA family.

The protein resides in the cytoplasm. The enzyme catalyses L-lysyl-[protein] + 3 S-adenosyl-L-methionine = N(6),N(6),N(6)-trimethyl-L-lysyl-[protein] + 3 S-adenosyl-L-homocysteine + 3 H(+). Its function is as follows. Methylates ribosomal protein L11. This is Ribosomal protein L11 methyltransferase from Cupriavidus necator (strain ATCC 17699 / DSM 428 / KCTC 22496 / NCIMB 10442 / H16 / Stanier 337) (Ralstonia eutropha).